The sequence spans 142 residues: Large ribosomal subunit protein uL11 (142 aa).

Belongs to the universal ribosomal protein uL11 family. In terms of assembly, part of the ribosomal stalk of the 50S ribosomal subunit. Interacts with L10 and the large rRNA to form the base of the stalk. L10 forms an elongated spine to which L12 dimers bind in a sequential fashion forming a multimeric L10(L12)X complex. In terms of processing, one or more lysine residues are methylated.

Its function is as follows. Forms part of the ribosomal stalk which helps the ribosome interact with GTP-bound translation factors. This is Large ribosomal subunit protein uL11 from Mesoplasma florum (strain ATCC 33453 / NBRC 100688 / NCTC 11704 / L1) (Acholeplasma florum).